Consider the following 141-residue polypeptide: 3-hydroxyacyl-[acyl-carrier-protein] dehydratase FabZ (141 aa).

Residue histidine 48 is part of the active site.

Belongs to the thioester dehydratase family. FabZ subfamily.

It is found in the cytoplasm. The enzyme catalyses a (3R)-hydroxyacyl-[ACP] = a (2E)-enoyl-[ACP] + H2O. Functionally, involved in unsaturated fatty acids biosynthesis. Catalyzes the dehydration of short chain beta-hydroxyacyl-ACPs and long chain saturated and unsaturated beta-hydroxyacyl-ACPs. This is 3-hydroxyacyl-[acyl-carrier-protein] dehydratase FabZ from Herpetosiphon aurantiacus (strain ATCC 23779 / DSM 785 / 114-95).